A 313-amino-acid polypeptide reads, in one-letter code: Carbamate kinase (313 aa).

The protein belongs to the carbamate kinase family.

The protein resides in the cytoplasm. It catalyses the reaction hydrogencarbonate + NH4(+) + ATP = carbamoyl phosphate + ADP + H2O + H(+). It functions in the pathway metabolic intermediate metabolism; carbamoyl phosphate degradation; CO(2) and NH(3) from carbamoyl phosphate: step 1/1. The sequence is that of Carbamate kinase (arcC) from Oenococcus oeni (Leuconostoc oenos).